Reading from the N-terminus, the 224-residue chain is BOS complex subunit TMEM147 (224 aa).

Residues 1 to 21 form a helical membrane-spanning segment; it reads MTLFHFGNCFALAYFPYFITY. Residues 22-34 lie on the Cytoplasmic side of the membrane; the sequence is KCSGLSEYNAFWK. The helical transmembrane segment at 35 to 58 threads the bilayer; the sequence is CVQAGVTYLFVQLCKMLFLATFFP. The Lumenal segment spans residues 59-66; it reads TWEGGIYD. A helical transmembrane segment spans residues 67–88; sequence FIGEFMKASVDVADLIGLNLVM. Residues 89–98 lie on the Cytoplasmic side of the membrane; it reads SRNAGKGEYK. A helical membrane pass occupies residues 99–124; the sequence is IMVAALGWATAELIMSRCIPLWVGAR. At 125–129 the chain is on the lumenal side; sequence GIEFD. A helical membrane pass occupies residues 130-155; that stretch reads WKYIQMSIDSNISLVHYIVASAQVWM. The Cytoplasmic portion of the chain corresponds to 156–164; the sequence is ITRYDLYHT. Residues 165–187 traverse the membrane as a helical segment; the sequence is FRPAVLLLMFLSVYKAFVMETFV. At 188–194 the chain is on the lumenal side; that stretch reads HLCSLGS. The helical transmembrane segment at 195-216 threads the bilayer; sequence WAALLARAVVTGLLALSTLALY. The Cytoplasmic segment spans residues 217 to 224; sequence VAVVNVHS.

The protein belongs to the TMEM147 family. Component of the back of Sec61 (BOS) complex, composed of NCLN/Nicalin, NOMO (NOMO1, NOMO2 or NOMO3) and TMEM147. The BOS complex is part of the multi-pass translocon (MPT) complex, composed of three subcomplexes, the GEL complex (composed of RAB5IF/OPTI and TMCO1), the BOS complex (composed of NCLN/Nicalin, NOMO and TMEM147) and the PAT complex (composed of WDR83OS/Asterix and CCDC47). The MPT complex associates with the SEC61 complex. Interacts with CHRM3, CHRM1 and AVPR2. Interacts with LBR; promoting LBR localization to the nucleus inner membrane. Interacts with DHCR7.

It localises to the endoplasmic reticulum membrane. The protein localises to the nucleus membrane. It is found in the cell membrane. Its function is as follows. Component of the multi-pass translocon (MPT) complex that mediates insertion of multi-pass membrane proteins into the lipid bilayer of membranes. The MPT complex takes over after the SEC61 complex: following membrane insertion of the first few transmembrane segments of proteins by the SEC61 complex, the MPT complex occludes the lateral gate of the SEC61 complex to promote insertion of subsequent transmembrane regions. Also acts as a negative regulator of CHRM3 function, most likely by interfering with its trafficking to the cell membrane. Negatively regulates CHRM3-mediated calcium mobilization and activation of RPS6KA1/p90RSK activity. Regulates LBR localization to the nucleus inner membrane. The chain is BOS complex subunit TMEM147 from Homo sapiens (Human).